The primary structure comprises 207 residues: Small ribosomal subunit protein uS4 (207 aa).

Positions 30–53 are disordered; the sequence is DKSKFDTKPGQHGRTSGQRTSDFG. Positions 42 to 52 are enriched in polar residues; it reads GRTSGQRTSDF. In terms of domain architecture, S4 RNA-binding spans 97–157; the sequence is SRLDNVVYRM…EKSKKQARIV (61 aa).

It belongs to the universal ribosomal protein uS4 family. Part of the 30S ribosomal subunit. Contacts protein S5. The interaction surface between S4 and S5 is involved in control of translational fidelity.

One of the primary rRNA binding proteins, it binds directly to 16S rRNA where it nucleates assembly of the body of the 30S subunit. Functionally, with S5 and S12 plays an important role in translational accuracy. This chain is Small ribosomal subunit protein uS4, found in Delftia acidovorans (strain DSM 14801 / SPH-1).